Consider the following 488-residue polypeptide: Mannosylglycerate hydrolase MGH1 (488 aa).

Residues Tyr-94, 98–101, Tyr-146, Gln-167, and Gly-227 each bind substrate; that span reads WNWD. Catalysis depends on Asp-229, which acts as the Proton donor. Substrate is bound by residues Arg-262 and 415 to 416; that span reads YW. The Proton acceptor role is filled by Glu-459.

The protein belongs to the glycosyl hydrolase 63 family.

It carries out the reaction (2R)-2-O-(alpha-D-mannosyl)-glycerate + H2O = D-mannose + (R)-glycerate. It catalyses the reaction (2R)-2-O-(alpha-D-glucopyranosyl)-glycerate + H2O = (R)-glycerate + D-glucose. Activity is not dependent on divalent cations, but it is enhanced by Mn(2+). Its function is as follows. Catalyzes the hydrolysis of alpha-D-mannosyl-glycerate (MG) to D-glycerate and D-mannose. Can also hydrolyze alpha-D-glucopyranosyl-glycerate (GG)with lower efficiency. The polypeptide is Mannosylglycerate hydrolase MGH1 (Selaginella moellendorffii (Spikemoss)).